The sequence spans 583 residues: Mitogen-activated protein kinase 4 (583 aa).

Residues 20–312 (FIDFQPLGFG…AEMGLQHPYM (293 aa)) form the Protein kinase domain. ATP-binding positions include 26 to 34 (LGFGVNGLV) and Lys49. The Proton acceptor role is filled by Asp149. A Phosphoserine; by PAK1, PAK2 and PAK3 modification is found at Ser186. Positions 186-188 (SEG) match the SEG motif motif. Residues 328-333 (FRIEDE) carry the FRIEDE motif motif. 2 stretches are compositionally biased toward basic and acidic residues: residues 366–379 (DRCQ…RDPR) and 391–410 (VDPR…QSHS). Positions 366 to 410 (DRCQDASEVQRDPRAGSTPLAEDVQVDPRKDSQSSSERFLEQSHS) are disordered. Residue Ser430 is modified to Phosphoserine. The segment at 495-531 (STQSGSERASPPPDAPEPRLSASPPGHPTPIDGGASP) is disordered.

It belongs to the protein kinase superfamily. CMGC Ser/Thr protein kinase family. MAP kinase subfamily. As to quaternary structure, homodimer. Heterodimer with ERK3/MAPK6. Interacts with (via FRIEDE motif) MAPKAPK5. Requires Mg(2+) as cofactor. Phosphorylated at Ser-186 by PAK1, PAK2 and PAK3 resulting in catalytic activation. Phosphorylated by MAPKAPK5 at other sites.

The protein localises to the cytoplasm. It localises to the nucleus. It carries out the reaction L-seryl-[protein] + ATP = O-phospho-L-seryl-[protein] + ADP + H(+). It catalyses the reaction L-threonyl-[protein] + ATP = O-phospho-L-threonyl-[protein] + ADP + H(+). Activated by phosphorylation at Ser-186. Its function is as follows. Atypical MAPK protein. Phosphorylates microtubule-associated protein 2 (MAP2) and MAPKAPK5. The precise role of the complex formed with MAPKAPK5 is still unclear, but the complex follows a complex set of phosphorylation events: upon interaction with atypical MAPKAPK5, ERK4/MAPK4 is phosphorylated at Ser-186 and then mediates phosphorylation and activation of MAPKAPK5, which in turn phosphorylates ERK4/MAPK4. May promote entry in the cell cycle. In Mus musculus (Mouse), this protein is Mitogen-activated protein kinase 4 (Mapk4).